The following is a 479-amino-acid chain: NADH-quinone oxidoreductase subunit N (479 aa).

The next 14 helical transmembrane spans lie at 3–23 (MLYGIMPEISLLLSALIFQLI), 40–60 (IGFAAILIAILVFHPSWFNGI), 77–97 (IIILIFYIFLTLIYSGYIKVA), 102–122 (HSEYIVLMQLGALGGLILVSA), 125–145 (FMVMYLGIEMQGIIGYILTTF), 159–179 (YFILGTVFSAIMLFGISLVYG), 200–220 (MAVLVAAILMILVGVLFKLSI), 234–254 (APLVVVALFSSLPKISVLALL), 268–288 (FFYIKTIIMVLACLSLIVGAF), 299–319 (FIAYSAILNLGYAVLALVANS), 327–347 (ISYFYIIIYAASMLGFIAIII), 373–393 (SILIAIQMFSLVGIPPFAGFI), 409–429 (ELIIMGIAAVVIGSYCYLNIV), and 452–472 (LVSIASTIIVISLMIICMLFG).

It belongs to the complex I subunit 2 family. As to quaternary structure, NDH-1 is composed of 14 different subunits. Subunits NuoA, H, J, K, L, M, N constitute the membrane sector of the complex.

Its subcellular location is the cell inner membrane. It carries out the reaction a quinone + NADH + 5 H(+)(in) = a quinol + NAD(+) + 4 H(+)(out). In terms of biological role, NDH-1 shuttles electrons from NADH, via FMN and iron-sulfur (Fe-S) centers, to quinones in the respiratory chain. The immediate electron acceptor for the enzyme in this species is believed to be ubiquinone. Couples the redox reaction to proton translocation (for every two electrons transferred, four hydrogen ions are translocated across the cytoplasmic membrane), and thus conserves the redox energy in a proton gradient. This chain is NADH-quinone oxidoreductase subunit N, found in Orientia tsutsugamushi (strain Ikeda) (Rickettsia tsutsugamushi).